The primary structure comprises 261 residues: Imidazole glycerol phosphate synthase subunit HisF (261 aa).

Active-site residues include Asp16 and Asp135.

This sequence belongs to the HisA/HisF family. In terms of assembly, heterodimer of HisH and HisF.

Its subcellular location is the cytoplasm. It carries out the reaction 5-[(5-phospho-1-deoxy-D-ribulos-1-ylimino)methylamino]-1-(5-phospho-beta-D-ribosyl)imidazole-4-carboxamide + L-glutamine = D-erythro-1-(imidazol-4-yl)glycerol 3-phosphate + 5-amino-1-(5-phospho-beta-D-ribosyl)imidazole-4-carboxamide + L-glutamate + H(+). It functions in the pathway amino-acid biosynthesis; L-histidine biosynthesis; L-histidine from 5-phospho-alpha-D-ribose 1-diphosphate: step 5/9. In terms of biological role, IGPS catalyzes the conversion of PRFAR and glutamine to IGP, AICAR and glutamate. The HisF subunit catalyzes the cyclization activity that produces IGP and AICAR from PRFAR using the ammonia provided by the HisH subunit. The protein is Imidazole glycerol phosphate synthase subunit HisF of Mycobacterium ulcerans (strain Agy99).